A 316-amino-acid polypeptide reads, in one-letter code: Ribosomal RNA small subunit methyltransferase H (316 aa).

Residues alanine 35–histidine 37, aspartate 55, phenylalanine 84, aspartate 105, and glutamine 112 contribute to the S-adenosyl-L-methionine site.

This sequence belongs to the methyltransferase superfamily. RsmH family.

It is found in the cytoplasm. The enzyme catalyses cytidine(1402) in 16S rRNA + S-adenosyl-L-methionine = N(4)-methylcytidine(1402) in 16S rRNA + S-adenosyl-L-homocysteine + H(+). Its function is as follows. Specifically methylates the N4 position of cytidine in position 1402 (C1402) of 16S rRNA. This is Ribosomal RNA small subunit methyltransferase H from Streptococcus pneumoniae (strain Taiwan19F-14).